Consider the following 637-residue polypeptide: Protein kinase domain-containing protein ppk3 (637 aa).

One can recognise a Protein kinase domain in the interval 1–296; it reads MDFIKSAASF…QLLSSKLEVI (296 aa). The stretch at 414–450 is one HEAT repeat; it reads KTLNNELLRSLAVVQNDQHPTLRTNSTICLGKIAEYL. The segment covering 576–586 has biased composition (basic and acidic residues); the sequence is NDTTEIKEKKN. The disordered stretch occupies residues 576–637; sequence NDTTEIKEKK…ENNVEESWGL (62 aa). A compositionally biased stretch (acidic residues) spans 608 to 631; it reads ETEEQIDESWMENWNDEEETENNV.

Its subcellular location is the golgi apparatus. This Schizosaccharomyces pombe (strain 972 / ATCC 24843) (Fission yeast) protein is Protein kinase domain-containing protein ppk3 (ppk3).